A 708-amino-acid polypeptide reads, in one-letter code: C-Jun-amino-terminal kinase-interacting protein 1 (708 aa).

The disordered stretch occupies residues 1 to 26 (MAERESGLSGGAASPPAASPFLGLHI). Low complexity predominate over residues 11-24 (GAASPPAASPFLGL). Serine 14, serine 28, and serine 39 each carry phosphoserine. The segment at 69–368 (PPRAGLLSAG…PPRASLSSDT (300 aa)) is disordered. Residues 71–87 (RAGLLSAGSSGSAGSRL) are compositionally biased toward low complexity. Residue threonine 103 is modified to Phosphothreonine; by MAPK8, MAPK9 and MAPK10. Over residues 105 to 116 (GAEDDEEDDDEL) the composition is skewed to acidic residues. Residues 126 to 282 (SKAESGQEPA…EATEEIYLTP (157 aa)) are JNK-binding domain (JBD). At serine 149 the chain carries Phosphoserine. A minimal inhibitory domain (MID) region spans residues 154–173 (RPKRPTTLNLFPQVPRSQDT). Over residues 159–179 (TTLNLFPQVPRSQDTLNNNSL) the composition is skewed to polar residues. Phosphoserine occurs at positions 178, 184, 190, 192, and 193. Positions 191–201 (RSSSPLKTGEQ) are enriched in polar residues. Phosphothreonine; by MAPK8, MAPK9 and MAPK10 is present on threonine 202. At serine 211 the chain carries Phosphoserine. Polar residues predominate over residues 220–232 (PVPTQDRGTSTDS). Positions 264-274 (IHYQADVRLEA) are enriched in basic and acidic residues. Residues 280–468 (LTPVQRPPDP…NVFMSGRSRS (189 aa)) are interaction with MAP3K7. Residues 292–308 (PTSTFLPPTESRMSVSS) are compositionally biased toward polar residues. Phosphoserine is present on residues serine 308, serine 325, serine 327, serine 337, serine 352, serine 363, serine 366, serine 404, and serine 406. Short sequence motifs (D-box) lie at residues 350 to 357 (RGSLGEPP) and 361 to 369 (RASLSSDTS). Threonine 408 carries the post-translational modification Phosphothreonine. Residues 426 to 448 (EEYEEAPQPRPPTCLSEDSTPDE) form a disordered region. A phosphoserine mark is found at serine 441 and serine 444. Threonine 445 is subject to Phosphothreonine. A phosphoserine mark is found at serine 466, serine 468, serine 469, and serine 470. Residues 468–657 (SSSAESFGLF…PKNNKYFGFI (190 aa)) form an interaction with VRK2 region. The SH3 domain maps to 485–546 (EHEQTHRAIF…PAYYAIEVTK (62 aa)). The region spanning 558 to 697 (SDWIDQFRVK…FQQFYKQFVE (140 aa)) is the PID domain.

Belongs to the JIP scaffold family. Forms homo- or heterooligomeric complexes. Binds specific components of the JNK signaling pathway namely MAPK8/JNK1, MAPK9/JNK2, MAPK10/JNK3, MAP2K7/MKK7, MAP3K11/MLK3 and DLK1. Also binds the proline-rich domain-containing splice variant of apolipoprotein E receptor 2 (ApoER2). Interacts, via the PID domain, with ARHGEF28. Binds the cytoplasmic tails of LRP1 and LRP2 (Megalin). Binds the TPR motif-containing C-terminal of kinesin light chain, KLC1. Pre-assembled MAPK8IP1 scaffolding complexes are then transported as a cargo of kinesin, to the required subcellular location. Interacts with the cytoplasmic domain of APP. Interacts with DCLK2, VRK2 and MAP3K7/TAK1. Found in a complex with SH3RF1, RAC1, MAP3K11/MLK3, MAP2K7/MKK7 and MAPK8/JNK1. Found in a complex with SH3RF1, RAC2, MAP3K7/TAK1, MAP2K7/MKK7, MAPK8/JNK1 and MAPK9/JNK2. Interacts with SH3RF2. Post-translationally, phosphorylated by MAPK8, MAPK9 and MAPK10. Phosphorylation on Thr-103 is also necessary for the dissociation and activation of MAP3K12. Phosphorylated by VRK2. Hyperphosphorylated during mitosis following activation of stress-activated and MAP kinases. In terms of processing, ubiquitinated. Two preliminary events are required to prime for ubiquitination; phosphorylation and an increased in intracellular calcium concentration. Then, the calcium influx initiates ubiquitination and degradation by the ubiquitin-proteasome pathway. As to expression, highly expressed in brain and pancreatic beta-cells. Weaker expression found in kidney.

Its subcellular location is the cytoplasm. The protein resides in the perinuclear region. It localises to the nucleus. It is found in the endoplasmic reticulum membrane. The protein localises to the mitochondrion membrane. In terms of biological role, the JNK-interacting protein (JIP) group of scaffold proteins selectively mediates JNK signaling by aggregating specific components of the MAPK cascade to form a functional JNK signaling module. Required for JNK activation in response to excitotoxic stress. Cytoplasmic MAPK8IP1 causes inhibition of JNK-regulated activity by retaining JNK in the cytoplasm and thus inhibiting the JNK phosphorylation of c-Jun. May also participate in ApoER2-specific reelin signaling. Directly, or indirectly, regulates GLUT2 gene expression and beta-cell function. Appears to have a role in cell signaling in mature and developing nerve terminals. May function as a regulator of vesicle transport, through interactions with the JNK-signaling components and motor proteins. Functions as an anti-apoptotic protein and whose level seems to influence the beta-cell death or survival response. Acts as a scaffold protein that coordinates with SH3RF1 in organizing different components of the JNK pathway, including RAC1 or RAC2, MAP3K11/MLK3 or MAP3K7/TAK1, MAP2K7/MKK7, MAPK8/JNK1 and/or MAPK9/JNK2 into a functional multiprotein complex to ensure the effective activation of the JNK signaling pathway. Regulates the activation of MAPK8/JNK1 and differentiation of CD8(+) T-cells. This chain is C-Jun-amino-terminal kinase-interacting protein 1 (Mapk8ip1), found in Rattus norvegicus (Rat).